The following is a 419-amino-acid chain: Probable serine/threonine-protein kinase DDB_G0290859 (419 aa).

The Protein kinase domain occupies 40-387 (YDIISTIGSG…ASTIKKHPFF (348 aa)). Residues 46–54 (IGSGSYGEV) and lysine 69 contribute to the ATP site. The active-site Proton acceptor is aspartate 173. An AGC-kinase C-terminal domain is found at 388-419 (EGINWEEMANFNVEPPFKPTLSSDDDISYFTN).

Belongs to the protein kinase superfamily. AGC Ser/Thr protein kinase family.

The enzyme catalyses L-seryl-[protein] + ATP = O-phospho-L-seryl-[protein] + ADP + H(+). The catalysed reaction is L-threonyl-[protein] + ATP = O-phospho-L-threonyl-[protein] + ADP + H(+). This is Probable serine/threonine-protein kinase DDB_G0290859 from Dictyostelium discoideum (Social amoeba).